Here is a 263-residue protein sequence, read N- to C-terminus: NADH dehydrogenase [ubiquinone] iron-sulfur protein 3, mitochondrial (263 aa).

A mitochondrion-targeting transit peptide spans 1–35; sequence MVAAVARLWWRGLLGASALTRGAGRPSVLLLPVRR.

Belongs to the complex I 30 kDa subunit family. As to quaternary structure, core subunit of respiratory chain NADH dehydrogenase (Complex I) which is composed of 45 different subunits. Interacts with NDUFAF3. Interacts with RAB5IF. Found in subcomplexes containing subunits NDUFS2, MT-ND1 and NDUFA13.

It localises to the mitochondrion inner membrane. It catalyses the reaction a ubiquinone + NADH + 5 H(+)(in) = a ubiquinol + NAD(+) + 4 H(+)(out). Its function is as follows. Core subunit of the mitochondrial membrane respiratory chain NADH dehydrogenase (Complex I) which catalyzes electron transfer from NADH through the respiratory chain, using ubiquinone as an electron acceptor. Essential for the catalytic activity and assembly of complex I. This chain is NADH dehydrogenase [ubiquinone] iron-sulfur protein 3, mitochondrial (NDUFS3), found in Pongo pygmaeus (Bornean orangutan).